The following is a 404-amino-acid chain: Cysteine desulfurase IscS (404 aa).

Residues 75–76 (AT), N155, Q183, and 203–205 (SAH) contribute to the pyridoxal 5'-phosphate site. At K206 the chain carries N6-(pyridoxal phosphate)lysine. Residue T243 participates in pyridoxal 5'-phosphate binding. The Cysteine persulfide intermediate role is filled by C328. Residue C328 coordinates [2Fe-2S] cluster.

This sequence belongs to the class-V pyridoxal-phosphate-dependent aminotransferase family. NifS/IscS subfamily. In terms of assembly, homodimer. Forms a heterotetramer with IscU, interacts with other sulfur acceptors. It depends on pyridoxal 5'-phosphate as a cofactor.

The protein localises to the cytoplasm. The enzyme catalyses (sulfur carrier)-H + L-cysteine = (sulfur carrier)-SH + L-alanine. It functions in the pathway cofactor biosynthesis; iron-sulfur cluster biosynthesis. In terms of biological role, master enzyme that delivers sulfur to a number of partners involved in Fe-S cluster assembly, tRNA modification or cofactor biosynthesis. Catalyzes the removal of elemental sulfur atoms from cysteine to produce alanine. Functions as a sulfur delivery protein for Fe-S cluster synthesis onto IscU, an Fe-S scaffold assembly protein, as well as other S acceptor proteins. The chain is Cysteine desulfurase IscS from Vibrio campbellii (strain ATCC BAA-1116).